Consider the following 153-residue polypeptide: FAD synthase (153 aa).

Residues 9-10, 14-17, asparagine 92, and tyrosine 119 contribute to the ATP site; these read TF and HPGH.

Belongs to the archaeal FAD synthase family. In terms of assembly, homodimer. It depends on a divalent metal cation as a cofactor.

The enzyme catalyses FMN + ATP + H(+) = FAD + diphosphate. Its pathway is cofactor biosynthesis; FAD biosynthesis; FAD from FMN: step 1/1. Functionally, catalyzes the transfer of the AMP portion of ATP to flavin mononucleotide (FMN) to produce flavin adenine dinucleotide (FAD) coenzyme. The polypeptide is FAD synthase (Methanosphaerula palustris (strain ATCC BAA-1556 / DSM 19958 / E1-9c)).